We begin with the raw amino-acid sequence, 614 residues long: GPI transamidase component GAA1 (614 aa).

Topologically, residues 1–19 are cytoplasmic; the sequence is MALLEKLHRRIVDMGLVPR. The helical transmembrane segment at 20 to 40 threads the bilayer; the sequence is IIALLPVISMLCALFGFISIA. The Lumenal segment spans residues 41–356; that stretch reads ILPMDGQYRR…APRQFVSISS (316 aa). Asparagine 87 carries an N-linked (GlcNAc...) asparagine glycan. Residues 357–377 traverse the membrane as a helical segment; that stretch reads YLPSAVALSIAFAISSLNAFI. At 378-394 the chain is on the cytoplasmic side; the sequence is NNAYANISLFSEYNLVA. A helical transmembrane segment spans residues 395-415; the sequence is LLVWFVSLVISFVVSQAFLLI. Topologically, residues 416–464 are lumenal; it reads PSSGLLMTISMASCFLPLILSRKIHISEPLSYRLKNVAFLYFSLVSTSL. Residues 465–485 traverse the membrane as a helical segment; it reads LMINFAMALLIGTLAFPMTFV. The Cytoplasmic portion of the chain corresponds to 486–535; it reads KTIVESSSEHEVTTQSSNPIKTEPKDEIELVENHMDTTPATPQQQKQKLK. The chain crosses the membrane as a helical span at residues 536-556; sequence NLVLLILTNPFISITLFGLFF. Residues 557–577 are Lumenal-facing; the sequence is DDEFHGFDIINKLVSAWLDLK. A helical transmembrane segment spans residues 578-598; that stretch reads CWSWFVLCIGWLPCWLLILAS. Over 599-614 the chain is Cytoplasmic; that stretch reads SFESKSVVVRSKEKQS. The Prevents secretion from ER motif lies at 610-614; the sequence is KEKQS.

Forms a complex with CDC91, GPI17, GPI16 and GPI8.

It is found in the endoplasmic reticulum membrane. Its pathway is glycolipid biosynthesis; glycosylphosphatidylinositol-anchor biosynthesis. Component of the GPI transamidase complex. Required for a terminal step of GPI anchor attachment onto proteins. Affects endocytosis. This Saccharomyces cerevisiae (strain ATCC 204508 / S288c) (Baker's yeast) protein is GPI transamidase component GAA1 (GAA1).